Reading from the N-terminus, the 482-residue chain is Putative L-cysteine desulfhydrase 1 (482 aa).

The segment covering 1 to 10 has biased composition (acidic residues); it reads MASIPPDDDA. The segment at 1 to 45 is disordered; the sequence is MASIPPDDDAAAAAAAGAAENGYGNGKGNGNGPAPRPPPAKRPRS. Residues 11 to 22 show a composition bias toward low complexity; it reads AAAAAAGAAENG. Residue Lys-276 is modified to N6-(pyridoxal phosphate)lysine.

This sequence belongs to the class-V pyridoxal-phosphate-dependent aminotransferase family. Pyridoxal 5'-phosphate serves as cofactor.

The catalysed reaction is L-cysteine + H2O = hydrogen sulfide + pyruvate + NH4(+) + H(+). Catalyzes the production of hydrogen sulfide (H2S) from cysteine. The sequence is that of Putative L-cysteine desulfhydrase 1 from Oryza sativa subsp. japonica (Rice).